Here is a 282-residue protein sequence, read N- to C-terminus: Stress response regulator protein 1 (282 aa).

Composition is skewed to low complexity over residues 12-30 (NLSRSSSPAAPPTTNHSST) and 45-58 (NSQSDSNSTQSNNN). 3 disordered regions span residues 12–31 (NLSRSSSPAAPPTTNHSSTV), 43–84 (DINS…DDED), and 112–139 (LTPFDGQTTSPQDSIISSKSSNKSTTVV). Residues 66 to 77 (SDYNSYTHNQYY) show a composition bias toward polar residues. A compositionally biased stretch (low complexity) spans 125–139 (SIISSKSSNKSTTVV). One can recognise a Response regulatory domain in the interval 155–273 (SFLIVDDNII…LDFMANSIDD (119 aa)). D206 bears the 4-aspartylphosphate mark.

Functionally, required for stress adaptation, morphogenesis and virulence. This chain is Stress response regulator protein 1 (SRR1), found in Candida albicans (strain SC5314 / ATCC MYA-2876) (Yeast).